Reading from the N-terminus, the 138-residue chain is ATP synthase epsilon chain (138 aa).

Belongs to the ATPase epsilon chain family. In terms of assembly, F-type ATPases have 2 components, CF(1) - the catalytic core - and CF(0) - the membrane proton channel. CF(1) has five subunits: alpha(3), beta(3), gamma(1), delta(1), epsilon(1). CF(0) has three main subunits: a, b and c.

The protein localises to the cellular thylakoid membrane. Produces ATP from ADP in the presence of a proton gradient across the membrane. This Cyanothece sp. (strain PCC 7425 / ATCC 29141) protein is ATP synthase epsilon chain.